A 255-amino-acid chain; its full sequence is 3-oxoacyl-[acyl-carrier-protein] reductase MabA (255 aa).

NADP(+) contacts are provided by residues 32-35, arginine 55, 69-70, glycine 98, tyrosine 161, lysine 165, isoleucine 194, and arginine 205; these read NRGI and DV. Catalysis depends on tyrosine 161, which acts as the Proton acceptor.

The protein belongs to the short-chain dehydrogenases/reductases (SDR) family. As to quaternary structure, homotetramer.

The protein resides in the secreted. The protein localises to the cell wall. It catalyses the reaction a (3R)-hydroxyacyl-[ACP] + NADP(+) = a 3-oxoacyl-[ACP] + NADPH + H(+). The enzyme catalyses a (3R)-3-hydroxyacyl-CoA + NADP(+) = a 3-oxoacyl-CoA + NADPH + H(+). It carries out the reaction (3R)-3-hydroxybutanoyl-CoA + NADP(+) = acetoacetyl-CoA + NADPH + H(+). The catalysed reaction is (3R)-hydroxyoctanoyl-CoA + NADP(+) = 3-oxooctanoyl-CoA + NADPH + H(+). It functions in the pathway lipid metabolism; mycolic acid biosynthesis. Its function is as follows. Part of the mycobacterial fatty acid elongation system FAS-II, which is involved in mycolic acid biosynthesis. Catalyzes the NADPH-dependent reduction of beta-ketoacyl derivatives, the second step of the FAS-II elongation cycle. Has a preference for longer substrates. Can use CoA derivatives as substrates in vitro. This is 3-oxoacyl-[acyl-carrier-protein] reductase MabA from Mycolicibacterium smegmatis (strain ATCC 700084 / mc(2)155) (Mycobacterium smegmatis).